Consider the following 451-residue polypeptide: Phosphoglucosamine mutase (451 aa).

Ser-107 acts as the Phosphoserine intermediate in catalysis. 4 residues coordinate Mg(2+): Ser-107, Asp-246, Asp-248, and Asp-250. Ser-107 is subject to Phosphoserine.

It belongs to the phosphohexose mutase family. The cofactor is Mg(2+). In terms of processing, activated by phosphorylation.

The enzyme catalyses alpha-D-glucosamine 1-phosphate = D-glucosamine 6-phosphate. Its function is as follows. Catalyzes the conversion of glucosamine-6-phosphate to glucosamine-1-phosphate. This is Phosphoglucosamine mutase from Burkholderia ambifaria (strain MC40-6).